A 244-amino-acid polypeptide reads, in one-letter code: Probable transcriptional regulatory protein Aasi_0624 (244 aa).

The protein belongs to the TACO1 family.

It is found in the cytoplasm. The protein is Probable transcriptional regulatory protein Aasi_0624 of Amoebophilus asiaticus (strain 5a2).